The sequence spans 333 residues: Glycerol-3-phosphate dehydrogenase [NAD(P)+] (333 aa).

5 residues coordinate NADPH: Ser10, Trp11, His31, Arg32, and Lys105. 3 residues coordinate sn-glycerol 3-phosphate: Lys105, Gly136, and Ser138. Ala140 is a binding site for NADPH. Residues Lys191, Asp244, Ser254, Arg255, and Asn256 each coordinate sn-glycerol 3-phosphate. Lys191 serves as the catalytic Proton acceptor. Arg255 provides a ligand contact to NADPH. Ile279 and Glu281 together coordinate NADPH.

This sequence belongs to the NAD-dependent glycerol-3-phosphate dehydrogenase family.

The protein resides in the cytoplasm. It carries out the reaction sn-glycerol 3-phosphate + NAD(+) = dihydroxyacetone phosphate + NADH + H(+). The enzyme catalyses sn-glycerol 3-phosphate + NADP(+) = dihydroxyacetone phosphate + NADPH + H(+). The protein operates within membrane lipid metabolism; glycerophospholipid metabolism. In terms of biological role, catalyzes the reduction of the glycolytic intermediate dihydroxyacetone phosphate (DHAP) to sn-glycerol 3-phosphate (G3P), the key precursor for phospholipid synthesis. This Pelodictyon phaeoclathratiforme (strain DSM 5477 / BU-1) protein is Glycerol-3-phosphate dehydrogenase [NAD(P)+].